The sequence spans 479 residues: Cyclin-dependent kinase F-1 (479 aa).

Positions 21–418 (YEIFERVGSG…TMEMLNDKYL (398 aa)) constitute a Protein kinase domain. ATP contacts are provided by residues 27–35 (VGSGAYADV) and Lys-50. Phosphotyrosine is present on Tyr-32. Asp-146 serves as the catalytic Proton acceptor. Ser-179, Ser-208, and Ser-247 each carry phosphoserine. The segment at 187 to 221 (KLEDKDGETSEPPEVIPDYENSPRQGSDGQEREAM) is disordered. Thr-290 is subject to Phosphothreonine. The segment at 434–479 (PTMSGPDEDSPRKWNDYREMDSDSDFDGFGPMNVKPTSSGFTIEFP) is disordered. Basic and acidic residues predominate over residues 442–454 (DSPRKWNDYREMD). Polar residues predominate over residues 468 to 479 (KPTSSGFTIEFP).

It belongs to the protein kinase superfamily. CMGC Ser/Thr protein kinase family. CDC2/CDKX subfamily. Highly expressed in suspension cell culture. Expressed at low levels in all plant organs.

It carries out the reaction L-seryl-[protein] + ATP = O-phospho-L-seryl-[protein] + ADP + H(+). It catalyses the reaction L-threonyl-[protein] + ATP = O-phospho-L-threonyl-[protein] + ADP + H(+). The catalysed reaction is [DNA-directed RNA polymerase] + ATP = phospho-[DNA-directed RNA polymerase] + ADP + H(+). Functionally, CDK-activating kinase that modulates CDKD-2 and CDKD-3 activities by phosphorylation of the T-loop. Activates CDKD-2 C-terminal domain (CTD) kinase activity. Activates CDKA-1 probably by phosphorylation. Possesses a CDK kinase activity independently of association with cyclin CYCH1-1. Phosphorylates the CTD of the large subunit of RNA polymerase II. This chain is Cyclin-dependent kinase F-1 (CDKF-1), found in Arabidopsis thaliana (Mouse-ear cress).